Reading from the N-terminus, the 127-residue chain is Glycine cleavage system H protein (127 aa).

The Lipoyl-binding domain maps to 22–104 (EVVIGITHFA…YEGAWMVKVE (83 aa)). Residue lysine 63 is modified to N6-lipoyllysine.

Belongs to the GcvH family. The glycine cleavage system is composed of four proteins: P, T, L and H. (R)-lipoate serves as cofactor.

Functionally, the glycine cleavage system catalyzes the degradation of glycine. The H protein shuttles the methylamine group of glycine from the P protein to the T protein. Is also involved in protein lipoylation via its role as an octanoyl/lipoyl carrier protein intermediate. The protein is Glycine cleavage system H protein of Bacillus cereus (strain G9842).